Reading from the N-terminus, the 298-residue chain is Syntaxin-125 (298 aa).

Met-1 is modified (N-acetylmethionine). The Cytoplasmic portion of the chain corresponds to 1–274; that stretch reads MNDLFSNSFK…KSSRKWTCYA (274 aa). The stretch at 25-155 forms a coiled coil; it reads TMNLDKFFED…NEYKETVERR (131 aa). Positions 198 to 260 constitute a t-SNARE coiled-coil homology domain; sequence ISEIQERHDA…RRGTDQLQDA (63 aa). The helical; Anchor for type IV membrane protein transmembrane segment at 275 to 295 threads the bilayer; the sequence is IILFIVIFILLLIPLLPHIML. Topologically, residues 296 to 298 are vesicular; it reads MLK.

The protein belongs to the syntaxin family. In terms of assembly, part of the t-SNARE complex.

Its subcellular location is the membrane. Its function is as follows. Vesicle trafficking protein that functions in the secretory pathway. The protein is Syntaxin-125 (SYP125) of Arabidopsis thaliana (Mouse-ear cress).